The sequence spans 699 residues: Protein phosphatase 1 regulatory subunit 37 (699 aa).

A compositionally biased stretch (pro residues) spans methionine 1–proline 12. The segment at methionine 1–alanine 42 is disordered. Phosphoserine is present on residues serine 50 and serine 56. LRR repeat units follow at residues serine 220–alanine 240, threonine 248–glycine 269, serine 277–cysteine 297, glycine 306–glycine 326, and serine 334–lysine 354. The segment at arginine 467–serine 667 is disordered. Residues serine 510 to aspartate 525 are compositionally biased toward acidic residues. Serine 566 is subject to Phosphoserine. Pro residues-rich tracts occupy residues proline 588–threonine 613 and aspartate 622–proline 642.

This sequence belongs to the PPP1R37 family. Interacts with PPP1CA.

In terms of biological role, inhibits phosphatase activity of protein phosphatase 1 (PP1) complexes. The chain is Protein phosphatase 1 regulatory subunit 37 (PPP1R37) from Bos taurus (Bovine).